Reading from the N-terminus, the 105-residue chain is UPF0060 membrane protein Rmet_4032 (105 aa).

The next 4 helical transmembrane spans lie at 4 to 24, 28 to 48, 60 to 80, and 82 to 102; these read VGLY…PYLW, GASP…AWLL, AAYG…VDGV, and PSPW…IIVF.

Belongs to the UPF0060 family.

The protein resides in the cell inner membrane. This Cupriavidus metallidurans (strain ATCC 43123 / DSM 2839 / NBRC 102507 / CH34) (Ralstonia metallidurans) protein is UPF0060 membrane protein Rmet_4032.